The sequence spans 412 residues: Na(+)-translocating NADH-quinone reductase subunit B (412 aa).

3 helical membrane passes run 57-77, 127-147, and 163-183; these read MILVWFAVFPAMFWGMYNVGL, VFFLPIYITVFIVGGFWEVLF, and SILFALIVPPTLPLWQAALGI. Thr-236 carries the FMN phosphoryl threonine modification. 5 helical membrane-spanning segments follow: residues 270–290, 297–317, 322–342, 358–378, and 381–401; these read GSIGEVSTLMIFIGGAIILFG, IVAGVMIGMIATATLFNVIGS, MFAMPWYWHLVLGGFAFGMMF, WSYGVLIGVMCVLIRVVNPAY, and GMMLAILFANLFAPLFDYLVV.

This sequence belongs to the NqrB/RnfD family. In terms of assembly, composed of six subunits; NqrA, NqrB, NqrC, NqrD, NqrE and NqrF. The cofactor is FMN.

The protein resides in the cell inner membrane. It catalyses the reaction a ubiquinone + n Na(+)(in) + NADH + H(+) = a ubiquinol + n Na(+)(out) + NAD(+). Functionally, NQR complex catalyzes the reduction of ubiquinone-1 to ubiquinol by two successive reactions, coupled with the transport of Na(+) ions from the cytoplasm to the periplasm. NqrA to NqrE are probably involved in the second step, the conversion of ubisemiquinone to ubiquinol. The protein is Na(+)-translocating NADH-quinone reductase subunit B of Klebsiella pneumoniae subsp. pneumoniae (strain ATCC 700721 / MGH 78578).